The chain runs to 207 residues: Guanylate kinase (207 aa).

In terms of domain architecture, Guanylate kinase-like spans 5 to 184; that stretch reads GNLFIVSAPS…ALADLSAIIR (180 aa). Position 12–19 (12–19) interacts with ATP; the sequence is APSGAGKS. Residues 30 to 49 form a disordered region; that stretch reads PSDKQVSVSHTTRKPRPGEV.

The protein belongs to the guanylate kinase family.

Its subcellular location is the cytoplasm. It catalyses the reaction GMP + ATP = GDP + ADP. Essential for recycling GMP and indirectly, cGMP. The polypeptide is Guanylate kinase (Shewanella frigidimarina (strain NCIMB 400)).